A 489-amino-acid chain; its full sequence is uncharacterized protein (489 aa).

The next 11 membrane-spanning stretches (helical) occupy residues 29–49 (FIASCILFCCPGIYLAVTGLG), 67–87 (LLYALFTVCGWAGGPILKYLG), 90–110 (WALALGATGYPIYIGGLWYFD), 119–139 (IFTGAYEGIAAGLLWASTAYI), 152–172 (FIATQWTILAFGSTVGSFIAF), 186–206 (AVYIIFIIIMACAVLLAILFI), 276–296 (LNNVLFWVIQFFVPYLFTLIL), 308–328 (IIGLTIQAVVIMATLSGELGW), 351–371 (GGALVLYLLMGIQYGSSIVSV), 397–417 (AAGMCVSFGIDAAGVSFLGQG), and 418–438 (IIYFIFLFVMCASQLIMTSIF).

The protein localises to the membrane. This is an uncharacterized protein from Schizosaccharomyces pombe (strain 972 / ATCC 24843) (Fission yeast).